A 196-amino-acid polypeptide reads, in one-letter code: Hibernation-associated plasma protein HP-20 (196 aa).

Residues 1–23 (MTDVWRLAIFVLMVNVLNDQVSC) form the signal peptide. One can recognise a Collagen-like domain in the interval 25-63 (GPPGPVGYPGVPGVPGPRGPPGQPGAAGRPGDPGPKGPS). Positions 28–47 (GPVGYPGVPGVPGPRGPPGQ) are enriched in pro residues. The interval 28 to 64 (GPVGYPGVPGVPGPRGPPGQPGAAGRPGDPGPKGPSV) is disordered. A C1q domain is found at 67 to 196 (PCRERSAFTV…IYFSGFLISS (130 aa)).

Plasma; synthesized in the liver.

The protein localises to the secreted. In terms of biological role, plasma proteins HP-20, HP-25, HP-27 and HP-55 form a 140 kDa complex via disulfide bonds in the plasma and are hibernation specific. The chain is Hibernation-associated plasma protein HP-20 from Tamias sibiricus (Siberian chipmunk).